Consider the following 495-residue polypeptide: uncharacterized protein (495 aa).

A CHY-type zinc finger spans residues 389–457 (PLPNNGACEH…KDATCPHCGN (69 aa)). Zn(2+) is bound by residues cysteine 396, histidine 398, cysteine 410, cysteine 411, cysteine 417, cysteine 420, histidine 421, histidine 427, cysteine 437, cysteine 440, cysteine 452, and cysteine 455. A compositionally biased stretch (basic and acidic residues) spans 473–483 (GMRDRVRMSRK). Residues 473-495 (GMRDRVRMSRKDPRKYKRKHHGN) form a disordered region. Residues 484–495 (DPRKYKRKHHGN) are compositionally biased toward basic residues.

It localises to the cytoplasm. This is an uncharacterized protein from Schizosaccharomyces pombe (strain 972 / ATCC 24843) (Fission yeast).